A 70-amino-acid chain; its full sequence is Putative membrane protein insertion efficiency factor (70 aa).

This sequence belongs to the UPF0161 family.

Its subcellular location is the cell inner membrane. Its function is as follows. Could be involved in insertion of integral membrane proteins into the membrane. This is Putative membrane protein insertion efficiency factor from Rhizorhabdus wittichii (strain DSM 6014 / CCUG 31198 / JCM 15750 / NBRC 105917 / EY 4224 / RW1) (Sphingomonas wittichii).